A 227-amino-acid polypeptide reads, in one-letter code: Cytochrome c oxidase subunit 2 (227 aa).

Over 1–14 (MANHSQLGFQDASS) the chain is Mitochondrial intermembrane. The chain crosses the membrane as a helical span at residues 15 to 45 (PIMEELVEFHDHALMVALAICSLVLYLLTLM). Residues 46–58 (LMEKLSSNTVDAQ) are Mitochondrial matrix-facing. The chain crosses the membrane as a helical span at residues 59–86 (EVELIWTILPAIVLVLLALPSLQILYMM). Topologically, residues 87–227 (DEIDEPDLTL…FEAWSSLLSS (141 aa)) are mitochondrial intermembrane. Residues His-160, Cys-195, Glu-197, Cys-199, His-203, and Met-206 each contribute to the Cu cation site. Glu-197 is a Mg(2+) binding site.

It belongs to the cytochrome c oxidase subunit 2 family. As to quaternary structure, component of the cytochrome c oxidase (complex IV, CIV), a multisubunit enzyme composed of 14 subunits. The complex is composed of a catalytic core of 3 subunits MT-CO1, MT-CO2 and MT-CO3, encoded in the mitochondrial DNA, and 11 supernumerary subunits COX4I, COX5A, COX5B, COX6A, COX6B, COX6C, COX7A, COX7B, COX7C, COX8 and NDUFA4, which are encoded in the nuclear genome. The complex exists as a monomer or a dimer and forms supercomplexes (SCs) in the inner mitochondrial membrane with NADH-ubiquinone oxidoreductase (complex I, CI) and ubiquinol-cytochrome c oxidoreductase (cytochrome b-c1 complex, complex III, CIII), resulting in different assemblies (supercomplex SCI(1)III(2)IV(1) and megacomplex MCI(2)III(2)IV(2)). Found in a complex with TMEM177, COA6, COX18, COX20, SCO1 and SCO2. Interacts with TMEM177 in a COX20-dependent manner. Interacts with COX20. Interacts with COX16. It depends on Cu cation as a cofactor.

It is found in the mitochondrion inner membrane. It catalyses the reaction 4 Fe(II)-[cytochrome c] + O2 + 8 H(+)(in) = 4 Fe(III)-[cytochrome c] + 2 H2O + 4 H(+)(out). Component of the cytochrome c oxidase, the last enzyme in the mitochondrial electron transport chain which drives oxidative phosphorylation. The respiratory chain contains 3 multisubunit complexes succinate dehydrogenase (complex II, CII), ubiquinol-cytochrome c oxidoreductase (cytochrome b-c1 complex, complex III, CIII) and cytochrome c oxidase (complex IV, CIV), that cooperate to transfer electrons derived from NADH and succinate to molecular oxygen, creating an electrochemical gradient over the inner membrane that drives transmembrane transport and the ATP synthase. Cytochrome c oxidase is the component of the respiratory chain that catalyzes the reduction of oxygen to water. Electrons originating from reduced cytochrome c in the intermembrane space (IMS) are transferred via the dinuclear copper A center (CU(A)) of subunit 2 and heme A of subunit 1 to the active site in subunit 1, a binuclear center (BNC) formed by heme A3 and copper B (CU(B)). The BNC reduces molecular oxygen to 2 water molecules using 4 electrons from cytochrome c in the IMS and 4 protons from the mitochondrial matrix. The protein is Cytochrome c oxidase subunit 2 (MT-CO2) of Gallus gallus (Chicken).